Here is a 236-residue protein sequence, read N- to C-terminus: Enolase-phosphatase E1 (236 aa).

It belongs to the HAD-like hydrolase superfamily. MasA/MtnC family. Monomer. The cofactor is Mg(2+).

The catalysed reaction is 5-methylsulfanyl-2,3-dioxopentyl phosphate + H2O = 1,2-dihydroxy-5-(methylsulfanyl)pent-1-en-3-one + phosphate. Its pathway is amino-acid biosynthesis; L-methionine biosynthesis via salvage pathway; L-methionine from S-methyl-5-thio-alpha-D-ribose 1-phosphate: step 3/6. It functions in the pathway amino-acid biosynthesis; L-methionine biosynthesis via salvage pathway; L-methionine from S-methyl-5-thio-alpha-D-ribose 1-phosphate: step 4/6. Functionally, bifunctional enzyme that catalyzes the enolization of 2,3-diketo-5-methylthiopentyl-1-phosphate (DK-MTP-1-P) into the intermediate 2-hydroxy-3-keto-5-methylthiopentenyl-1-phosphate (HK-MTPenyl-1-P), which is then dephosphorylated to form the acireductone 1,2-dihydroxy-3-keto-5-methylthiopentene (DHK-MTPene). The protein is Enolase-phosphatase E1 of Frankia alni (strain DSM 45986 / CECT 9034 / ACN14a).